The following is a 34-amino-acid chain: Cycloamanide E proprotein (34 aa).

The propeptide occupies 1–10; that stretch reads MSDINAARLP. The segment at residues 11-17 is a cross-link (cyclopeptide (Ser-Pro)); that stretch reads SFFFPVP. Positions 18 to 34 are excised as a propeptide; sequence CISDDIEMVLTRGESLC.

Belongs to the MSDIN fungal toxin family. In terms of processing, processed by the macrocyclase-peptidase enzyme POPB to yield a cyclic decapeptide. POPB first removes 10 residues from the N-terminus. Conformational trapping of the remaining peptide forces the enzyme to release this intermediate rather than proceed to macrocyclization. The enzyme rebinds the remaining peptide in a different conformation and catalyzes macrocyclization of the N-terminal 7 residues.

Its function is as follows. Cyclic heptapeptide that belongs to the MSDIN-like toxin family responsible for a large number of food poisoning cases and deaths. Cycloaminide E is structurally related to other cycloamanides that are non-toxic to mammals but show immunosuppressive activity. The polypeptide is Cycloamanide E proprotein (Amanita phalloides (Death cap)).